The chain runs to 271 residues: NADPH-dependent 7-cyano-7-deazaguanine reductase (271 aa).

81–83 (IES) lines the substrate pocket. 83–84 (SK) is an NADPH binding site. Cys-177 (thioimide intermediate) is an active-site residue. Asp-184 acts as the Proton donor in catalysis. 216-217 (HE) contacts substrate. 245-246 (RG) is an NADPH binding site.

It belongs to the GTP cyclohydrolase I family. QueF type 2 subfamily. Homodimer.

The protein resides in the cytoplasm. It catalyses the reaction 7-aminomethyl-7-carbaguanine + 2 NADP(+) = 7-cyano-7-deazaguanine + 2 NADPH + 3 H(+). Its pathway is tRNA modification; tRNA-queuosine biosynthesis. Its function is as follows. Catalyzes the NADPH-dependent reduction of 7-cyano-7-deazaguanine (preQ0) to 7-aminomethyl-7-deazaguanine (preQ1). This is NADPH-dependent 7-cyano-7-deazaguanine reductase from Xanthomonas campestris pv. campestris (strain B100).